Consider the following 139-residue polypeptide: Ribonuclease VapC39 (139 aa).

Residues 4 to 133 form the PINc domain; sequence LLDVNVLIAL…DAALADSASA (130 aa). Residues Asp6 and Asp106 each contribute to the Mg(2+) site.

The protein belongs to the PINc/VapC protein family. Mg(2+) is required as a cofactor.

In terms of biological role, toxic component of a type II toxin-antitoxin (TA) system. An RNase. Its toxic effect is neutralized by coexpression with cognate antitoxin VapB39. This chain is Ribonuclease VapC39, found in Mycobacterium tuberculosis (strain CDC 1551 / Oshkosh).